The primary structure comprises 910 residues: Bifunctional glucose-6-phosphate 1-dehydrogenase/6-phosphogluconolactonase (910 aa).

The 6-phosphogluconolactonase stretch occupies residues 1 to 170 (MDYENFVKSA…DFHIASLFPN (170 aa)). A linker region spans residues 171 to 276 (IFYNIYMNNY…PATYLIDTSC (106 aa)). The tract at residues 277–910 (TNENVNINNN…FYEDDLLDIN (634 aa)) is glucose-6-phosphate 1-dehydrogenase. Residues 345–352 (GCSGDLAK), arginine 379, and lysine 548 contribute to the NADP(+) site. D-glucose 6-phosphate-binding positions include lysine 548, 578-582 (HYLGK), glutamate 616, and aspartate 635. Histidine 640 functions as the Proton acceptor in the catalytic mechanism. The interval 689 to 711 (ENFKEDENNDDESKKNHSYHDDP) is disordered. Lysine 742 contacts NADP(+). Residue lysine 745 coordinates D-glucose 6-phosphate. Arginine 755 lines the NADP(+) pocket. Glutamine 779 contacts D-glucose 6-phosphate. NADP(+) is bound at residue 785–787 (YLK).

In the N-terminal section; belongs to the glucosamine/galactosamine-6-phosphate isomerase family. 6-phosphogluconolactonase subfamily. This sequence in the C-terminal section; belongs to the glucose-6-phosphate dehydrogenase family. As to quaternary structure, homotetramer.

The catalysed reaction is 6-phospho-D-glucono-1,5-lactone + H2O = 6-phospho-D-gluconate + H(+). It catalyses the reaction D-glucose 6-phosphate + NADP(+) = 6-phospho-D-glucono-1,5-lactone + NADPH + H(+). The protein operates within carbohydrate degradation; pentose phosphate pathway; D-ribulose 5-phosphate from D-glucose 6-phosphate (oxidative stage): step 1/3. Its pathway is carbohydrate degradation; pentose phosphate pathway; D-ribulose 5-phosphate from D-glucose 6-phosphate (oxidative stage): step 2/3. With respect to regulation, G6PD activity is inhibited by glucosamine-6-phosphate, NADPH, and 4-(4-bromophenyl)-7-(3,4-dimethoxyphenyl)-4,6,7,8-tetrahydroquinoline-2,5(1 H,3H)-dione. G6PD and 6PGL activities can be reversibly inhibited by S-glutathionylation (in vitro). In terms of biological role, bifunctional enzyme which catalyzes the first two steps of the oxidative pentose-phosphate pathway, which represents a route for the dissimilation of carbohydrates besides glycolysis. The main function of this enzyme is to provide reducing power (NADPH) and pentose phosphates for fatty acid and nucleic acid synthesis. The protein is Bifunctional glucose-6-phosphate 1-dehydrogenase/6-phosphogluconolactonase of Plasmodium falciparum (isolate 3D7).